A 128-amino-acid chain; its full sequence is uncharacterized protein (128 aa).

The protein localises to the mitochondrion. This is an uncharacterized protein from Saccharomyces cerevisiae (strain ATCC 204508 / S288c) (Baker's yeast).